The primary structure comprises 833 residues: Piwi-like protein 2 (833 aa).

In terms of domain architecture, PAZ spans 227 to 353; the sequence is RINRVLNDNS…IPGELCFLCG (127 aa). The interval 313–338 is disordered; sequence PMRRERKKKDEEGVEKEKEKEAPEEK. The segment covering 320-338 has biased composition (basic and acidic residues); that stretch reads KKDEEGVEKEKEKEAPEEK. Residues 515 to 815 form the Piwi domain; it reads KMALVFVPDD…LAELVGKVHK (301 aa).

This sequence belongs to the argonaute family. Piwi subfamily. As to expression, expressed in dividing adult stem cells.

Functionally, required for the production of functional progeny from adult somatic stem cells (neoblasts). In Schmidtea mediterranea (Freshwater planarian flatworm), this protein is Piwi-like protein 2 (wi-2).